Reading from the N-terminus, the 228-residue chain is MGKSDRLQQGSKGKGGGKRKHGKCVLMFDDKDRQDFLTGFHKRKLERRRAALEEMKSKLKEEQKRLREERHKEYLKMLQERRQALDEADELEEAITATTECVQYDHPNHTVTVTTISDLDLSADRLLEPAQRDGGDGEERERTEALPKQAGNPLLSKKIQSLTASLNSLVKQKKRRKQKRRQEAKQRSHQSDRKSSSSAFVHNNKQKQGKSTKRQRRRQTGRNERSQD.

The tract at residues 1 to 22 (MGKSDRLQQGSKGKGGGKRKHG) is disordered. Residues 40–103 (FHKRKLERRR…AITATTECVQ (64 aa)) adopt a coiled-coil conformation. Basic and acidic residues predominate over residues 126–145 (LLEPAQRDGGDGEERERTEA). The tract at residues 126–228 (LLEPAQRDGG…QTGRNERSQD (103 aa)) is disordered. Polar residues predominate over residues 158–170 (KIQSLTASLNSLV). Positions 171–180 (KQKKRRKQKR) are enriched in basic residues. The segment covering 181-195 (RQEAKQRSHQSDRKS) has biased composition (basic and acidic residues). The span at 204 to 220 (NKQKQGKSTKRQRRRQT) shows a compositional bias: basic residues.

It belongs to the RRP17 family.

It localises to the nucleus. It is found in the nucleolus. Its function is as follows. May bind to rRNA. This chain is Nucleolar protein 12 (nol12), found in Danio rerio (Zebrafish).